Here is a 185-residue protein sequence, read N- to C-terminus: ATP synthase subunit b 2 (185 aa).

The tract at residues 1–23 (MAEGHGDAKGATAHTAADGGHKA) is disordered. Over residues 9–18 (KGATAHTAAD) the composition is skewed to low complexity. The helical transmembrane segment at 37 to 57 (LVSLTIAFVALYLIVSKIILP) threads the bilayer.

It belongs to the ATPase B chain family. In terms of assembly, F-type ATPases have 2 components, F(1) - the catalytic core - and F(0) - the membrane proton channel. F(1) has five subunits: alpha(3), beta(3), gamma(1), delta(1), epsilon(1). F(0) has three main subunits: a(1), b(2) and c(10-14). The alpha and beta chains form an alternating ring which encloses part of the gamma chain. F(1) is attached to F(0) by a central stalk formed by the gamma and epsilon chains, while a peripheral stalk is formed by the delta and b chains.

It is found in the cell inner membrane. Its function is as follows. F(1)F(0) ATP synthase produces ATP from ADP in the presence of a proton or sodium gradient. F-type ATPases consist of two structural domains, F(1) containing the extramembraneous catalytic core and F(0) containing the membrane proton channel, linked together by a central stalk and a peripheral stalk. During catalysis, ATP synthesis in the catalytic domain of F(1) is coupled via a rotary mechanism of the central stalk subunits to proton translocation. Functionally, component of the F(0) channel, it forms part of the peripheral stalk, linking F(1) to F(0). The b'-subunit is a diverged and duplicated form of b found in plants and photosynthetic bacteria. In Rhodopseudomonas palustris (strain BisB5), this protein is ATP synthase subunit b 2 (atpF2).